The sequence spans 502 residues: 9-beta-pimara-7,15-diene oxidase (502 aa).

2 helical membrane-spanning segments follow: residues 4–26 (INSE…ALLT) and 106–128 (LLVS…GAYW). Residue C438 coordinates heme.

The protein belongs to the cytochrome P450 family. The cofactor is heme.

The protein localises to the membrane. It carries out the reaction 9beta-pimara-7,15-diene + 3 reduced [NADPH--hemoprotein reductase] + 3 O2 = 9beta-pimara-7,15-dien-19-oate + 3 oxidized [NADPH--hemoprotein reductase] + 4 H2O + 4 H(+). In terms of biological role, involved in momilactone phytoalexins biosynthesis; acts as a multifunctional diterpene oxidase. Participates in the biosynthetic steps between 9-beta-pimara-7,15-diene and 3-beta-hydroxy-9-beta-pimara-7,15-dien-19,6-beta-olide. Also catalyzes consecutive oxidations at C19 of syn-stemod-13(17)-ene. In Oryza sativa subsp. japonica (Rice), this protein is 9-beta-pimara-7,15-diene oxidase (CYP99A3).